The following is a 209-amino-acid chain: Methylated-DNA--protein-cysteine methyltransferase (209 aa).

Cys-5 lines the Zn(2+) pocket. Phosphoserine is present on Ser-14. Positions 24 and 29 each coordinate Zn(2+). The interval 35 to 57 (SGKTPSSDPKEAPASPELLGGPE) is disordered. Position 89 (His-89) interacts with Zn(2+). DNA contacts are provided by Thr-99, Tyr-118, Gln-119, Asn-127, and Arg-132. Cys-149 serves as the catalytic Nucleophile; methyl group acceptor. Ser-155 is a binding site for DNA. Ser-205 carries the phosphoserine modification.

Belongs to the MGMT family. Requires Zn(2+) as cofactor.

It is found in the nucleus. The catalysed reaction is a 6-O-methyl-2'-deoxyguanosine in DNA + L-cysteinyl-[protein] = S-methyl-L-cysteinyl-[protein] + a 2'-deoxyguanosine in DNA. It catalyses the reaction a 4-O-methyl-thymidine in DNA + L-cysteinyl-[protein] = a thymidine in DNA + S-methyl-L-cysteinyl-[protein]. Its function is as follows. Involved in the cellular defense against the biological effects of O6-methylguanine (O6-MeG) and O4-methylthymine (O4-MeT) in DNA. Repairs the methylated nucleobase in DNA by stoichiometrically transferring the methyl group to a cysteine residue in the enzyme. This is a suicide reaction: the enzyme is irreversibly inactivated. This Cricetulus griseus (Chinese hamster) protein is Methylated-DNA--protein-cysteine methyltransferase (MGMT).